Consider the following 468-residue polypeptide: mRNA cleavage and polyadenylation factor CLP1 (468 aa).

Residues methionine 1–serine 22 form a disordered region. Residues glutamate 35, lysine 74, and histidine 138–serine 143 contribute to the ATP site.

Belongs to the Clp1 family. Clp1 subfamily. As to quaternary structure, component of a pre-mRNA cleavage factor complex. Interacts directly with PCF11.

Its subcellular location is the nucleus. Functionally, required for endonucleolytic cleavage during polyadenylation-dependent pre-mRNA 3'-end formation. This is mRNA cleavage and polyadenylation factor CLP1 from Phaeosphaeria nodorum (strain SN15 / ATCC MYA-4574 / FGSC 10173) (Glume blotch fungus).